An 87-amino-acid chain; its full sequence is Small ribosomal subunit protein uS17 (87 aa).

Belongs to the universal ribosomal protein uS17 family. As to quaternary structure, part of the 30S ribosomal subunit.

In terms of biological role, one of the primary rRNA binding proteins, it binds specifically to the 5'-end of 16S ribosomal RNA. This is Small ribosomal subunit protein uS17 from Heliobacterium modesticaldum (strain ATCC 51547 / Ice1).